The sequence spans 412 residues: Peptidase T (412 aa).

Residue His84 coordinates Zn(2+). Asp86 is a catalytic residue. Zn(2+) is bound at residue Asp146. Glu179 serves as the catalytic Proton acceptor. Zn(2+) is bound by residues Glu180, Asp202, and His385.

This sequence belongs to the peptidase M20B family. It depends on Zn(2+) as a cofactor.

The protein resides in the cytoplasm. It carries out the reaction Release of the N-terminal residue from a tripeptide.. Its function is as follows. Cleaves the N-terminal amino acid of tripeptides. This chain is Peptidase T, found in Haemophilus influenzae (strain PittGG).